The primary structure comprises 362 residues: Histidinol-phosphate aminotransferase (362 aa).

Lysine 218 carries the N6-(pyridoxal phosphate)lysine modification.

This sequence belongs to the class-II pyridoxal-phosphate-dependent aminotransferase family. Histidinol-phosphate aminotransferase subfamily. In terms of assembly, homodimer. It depends on pyridoxal 5'-phosphate as a cofactor.

The enzyme catalyses L-histidinol phosphate + 2-oxoglutarate = 3-(imidazol-4-yl)-2-oxopropyl phosphate + L-glutamate. It functions in the pathway amino-acid biosynthesis; L-histidine biosynthesis; L-histidine from 5-phospho-alpha-D-ribose 1-diphosphate: step 7/9. This chain is Histidinol-phosphate aminotransferase, found in Ruegeria sp. (strain TM1040) (Silicibacter sp.).